The following is a 55-amino-acid chain: Large ribosomal subunit protein bL33 (55 aa).

The protein belongs to the bacterial ribosomal protein bL33 family.

This chain is Large ribosomal subunit protein bL33, found in Azoarcus sp. (strain BH72).